The sequence spans 102 residues: Iron-sulfur cluster assembly protein CyaY (102 aa).

This sequence belongs to the frataxin family.

Involved in iron-sulfur (Fe-S) cluster assembly. May act as a regulator of Fe-S biogenesis. In Mannheimia succiniciproducens (strain KCTC 0769BP / MBEL55E), this protein is Iron-sulfur cluster assembly protein CyaY.